Reading from the N-terminus, the 555-residue chain is Gamma-aminobutyric acid receptor subunit alpha-4 (555 aa).

The N-terminal stretch at 1–35 (MVSAKKVPAIAMSFGVSFALLHFLCLAACLNESPG) is a signal peptide. Over 36–259 (QNQKEEKLCP…FHLRRKMGYF (224 aa)) the chain is Extracellular. N-linked (GlcNAc...) asparagine glycosylation is present at Asn47. Arg100 contacts 4-aminobutanoate. Asn144 and Asn157 each carry an N-linked (GlcNAc...) asparagine glycan. Thr163 serves as a coordination point for 4-aminobutanoate. Cys172 and Cys186 are disulfide-bonded. The helical transmembrane segment at 260–280 (MIQTYIPCIMTVILSQVSFWI) threads the bilayer. Over 281-284 (NKES) the chain is Cytoplasmic. The helical transmembrane segment at 285–305 (VPARTVFGITTVLTMTTLSIS) threads the bilayer. The Extracellular segment spans residues 306–318 (ARHSLPKVSYATA). The helical transmembrane segment at 319–341 (MDWFIAVCFAFVFSALIEFAAVN) threads the bilayer. Residues 342–518 (YFTNVQMEKA…PPPSGSGTSK (177 aa)) are Cytoplasmic-facing. Disordered stretches follow at residues 354–435 (KTSK…SPNP) and 495–516 (GTSG…GSGT). The segment covering 410–421 (SSKSSTVVQGSS) has biased composition (low complexity). Residues 422-435 (EATPQSYLASSPNP) show a composition bias toward polar residues. Residues 519–545 (IDKYARILFPVTFGAFNMVYWVVYLSK) form a helical membrane-spanning segment. The Extracellular portion of the chain corresponds to 546 to 555 (DTMEKSESLM).

The protein belongs to the ligand-gated ion channel (TC 1.A.9) family. Gamma-aminobutyric acid receptor (TC 1.A.9.5) subfamily. GABRA4 sub-subfamily. In terms of assembly, heteropentamer, formed by a combination of alpha (GABRA1-6), beta (GABRB1-3), gamma (GABRG1-3), delta (GABRD), epsilon (GABRE), rho (GABRR1-3), pi (GABRP) and theta (GABRQ) chains, each subunit exhibiting distinct physiological and pharmacological properties. In terms of tissue distribution, expressed in the brain.

Its subcellular location is the cell membrane. The protein resides in the postsynaptic cell membrane. The catalysed reaction is chloride(in) = chloride(out). With respect to regulation, potentiated by histamine. Its function is as follows. Alpha subunit of the heteropentameric ligand-gated chloride channel gated by gamma-aminobutyric acid (GABA), a major inhibitory neurotransmitter in the brain. GABA-gated chloride channels, also named GABA(A) receptors (GABAAR), consist of five subunits arranged around a central pore and contain GABA active binding site(s) located at the alpha and beta subunit interface(s). When activated by GABA, GABAARs selectively allow the flow of chloride anions across the cell membrane down their electrochemical gradient. GABAARs containing alpha-4 are predominantly extrasynaptic, contributing to tonic inhibition in dentate granule cells and thalamic relay neurons. Extrasynaptic alpha-4-containing GABAARs control levels of excitability and network activity. GABAARs containing alpha-4 are often found with the delta or gamma-2 subunits, in combination with beta subunits. GABAAR containing alpha-4-beta-3-delta subunits can simultaneously bind GABA and histamine where histamine binds at the interface of two neighboring beta subunits, which may be involved in the regulation of sleep and wakefulness. The protein is Gamma-aminobutyric acid receptor subunit alpha-4 (GABRA4) of Bos taurus (Bovine).